We begin with the raw amino-acid sequence, 348 residues long: Alpha-2-HS-glycoprotein (348 aa).

An N-terminal signal peptide occupies residues 1–18 (MKTLVLLLCFTLLWGCQS). The region spanning 19–133 (APQGTGLGFR…QFSVMHTKCH (115 aa)) is the Cystatin fetuin-A-type 1 domain. Cystine bridges form between Cys32–Cys339, Cys89–Cys100, Cys114–Cys132, Cys146–Cys149, Cys208–Cys219, and Cys230–Cys247. Asn99 carries N-linked (GlcNAc...) asparagine glycosylation. 2 positions are modified to phosphoserine: Ser134 and Ser138. The 112-residue stretch at 144 to 255 (KVCPHCALLT…TCTAFPTQAN (112 aa)) folds into the Cystatin fetuin-A-type 2 domain. N-linked (GlcNAc...) asparagine glycosylation is found at Asn156 and Asn176. 4 positions are modified to phosphoserine: Ser307, Ser311, Ser314, and Ser316.

This sequence belongs to the fetuin family. Phosphorylated by FAM20C in the extracellular medium. Expressed by the liver and secreted in plasma.

It localises to the secreted. This Meriones unguiculatus (Mongolian jird) protein is Alpha-2-HS-glycoprotein (AHSG).